Reading from the N-terminus, the 250-residue chain is 3-deoxy-manno-octulosonate cytidylyltransferase (250 aa).

It belongs to the KdsB family.

It is found in the cytoplasm. It carries out the reaction 3-deoxy-alpha-D-manno-oct-2-ulosonate + CTP = CMP-3-deoxy-beta-D-manno-octulosonate + diphosphate. Its pathway is nucleotide-sugar biosynthesis; CMP-3-deoxy-D-manno-octulosonate biosynthesis; CMP-3-deoxy-D-manno-octulosonate from 3-deoxy-D-manno-octulosonate and CTP: step 1/1. The protein operates within bacterial outer membrane biogenesis; lipopolysaccharide biosynthesis. Functionally, activates KDO (a required 8-carbon sugar) for incorporation into bacterial lipopolysaccharide in Gram-negative bacteria. The sequence is that of 3-deoxy-manno-octulosonate cytidylyltransferase from Xanthomonas campestris pv. campestris (strain 8004).